The sequence spans 99 residues: DNA-directed RNA polymerase subunit omega (99 aa).

Belongs to the RNA polymerase subunit omega family. The RNAP catalytic core consists of 2 alpha, 1 beta, 1 beta' and 1 omega subunit. When a sigma factor is associated with the core the holoenzyme is formed, which can initiate transcription.

It carries out the reaction RNA(n) + a ribonucleoside 5'-triphosphate = RNA(n+1) + diphosphate. Functionally, promotes RNA polymerase assembly. Latches the N- and C-terminal regions of the beta' subunit thereby facilitating its interaction with the beta and alpha subunits. This Deinococcus radiodurans (strain ATCC 13939 / DSM 20539 / JCM 16871 / CCUG 27074 / LMG 4051 / NBRC 15346 / NCIMB 9279 / VKM B-1422 / R1) protein is DNA-directed RNA polymerase subunit omega (rpoZ).